The chain runs to 351 residues: Putative [LysW]-L-2-aminoadipate/[LysW]-L-glutamate phosphate reductase (351 aa).

NADP(+) contacts are provided by residues serine 9–valine 12 and serine 33–arginine 35. The active site involves cysteine 150. Residue asparagine 318 participates in NADP(+) binding.

It belongs to the NAGSA dehydrogenase family. Type 1 subfamily. LysY sub-subfamily.

The protein localises to the cytoplasm. It carries out the reaction [amino-group carrier protein]-C-terminal-N-(1-carboxy-5-oxopentan-1-yl)-L-glutamine + phosphate + NADP(+) = [amino-group carrier protein]-C-terminal-N-(1-carboxy-5-phosphooxy-5-oxopentan-1-yl)-L-glutamine + NADPH + H(+). It catalyses the reaction [amino-group carrier protein]-C-terminal-gamma-(L-glutamyl-5-semialdehyde)-L-glutamate + phosphate + NADP(+) = [amino-group carrier protein]-C-terminal-gamma-(5-phospho-L-glutamyl)-L-glutamate + NADPH + H(+). The protein operates within amino-acid biosynthesis; L-lysine biosynthesis via AAA pathway; L-lysine from L-alpha-aminoadipate (Thermus route): step 3/5. It functions in the pathway amino-acid biosynthesis; L-arginine biosynthesis. In terms of biological role, involved in both the arginine and lysine biosynthetic pathways. In Pyrobaculum aerophilum (strain ATCC 51768 / DSM 7523 / JCM 9630 / CIP 104966 / NBRC 100827 / IM2), this protein is Putative [LysW]-L-2-aminoadipate/[LysW]-L-glutamate phosphate reductase.